The primary structure comprises 433 residues: Trigger factor (433 aa).

One can recognise a PPIase FKBP-type domain in the interval 161–246 (NDRVIIDFVG…LNKVENMILP (86 aa)).

The protein belongs to the FKBP-type PPIase family. Tig subfamily.

Its subcellular location is the cytoplasm. The enzyme catalyses [protein]-peptidylproline (omega=180) = [protein]-peptidylproline (omega=0). Its function is as follows. Involved in protein export. Acts as a chaperone by maintaining the newly synthesized protein in an open conformation. Functions as a peptidyl-prolyl cis-trans isomerase. The sequence is that of Trigger factor from Haemophilus ducreyi (strain 35000HP / ATCC 700724).